The following is a 195-amino-acid chain: Magnetosome membrane protein 22 (195 aa).

Over residues 1–28 (MAAQTAASEAPAPAAAPADSPTTAGPTP) the composition is skewed to low complexity. Residues 1-31 (MAAQTAASEAPAPAAAPADSPTTAGPTPDSV) are disordered. Helical transmembrane passes span 45–65 (VLAA…AAVV), 90–110 (SVIA…AVAV), and 115–135 (LIPG…AGAT).

It is found in the magnetosome membrane. The polypeptide is Magnetosome membrane protein 22 (Magnetospirillum gryphiswaldense (strain DSM 6361 / JCM 21280 / NBRC 15271 / MSR-1)).